The sequence spans 473 residues: Photosystem II CP43 reaction center protein (473 aa).

The propeptide occupies methionine 1–glutamate 14. Threonine 15 carries the N-acetylthreonine modification. Residue threonine 15 is modified to Phosphothreonine. The next 5 membrane-spanning stretches (helical) occupy residues leucine 69 to alanine 93, leucine 134 to asparagine 155, lysine 178 to threonine 200, lysine 255 to serine 275, and tryptophan 291 to alanine 312. Glutamate 367 provides a ligand contact to [CaMn4O5] cluster. Residues arginine 447 to proline 471 traverse the membrane as a helical segment.

This sequence belongs to the PsbB/PsbC family. PsbC subfamily. As to quaternary structure, PSII is composed of 1 copy each of membrane proteins PsbA, PsbB, PsbC, PsbD, PsbE, PsbF, PsbH, PsbI, PsbJ, PsbK, PsbL, PsbM, PsbT, PsbX, PsbY, PsbZ, Psb30/Ycf12, at least 3 peripheral proteins of the oxygen-evolving complex and a large number of cofactors. It forms dimeric complexes. Requires Binds multiple chlorophylls and provides some of the ligands for the Ca-4Mn-5O cluster of the oxygen-evolving complex. It may also provide a ligand for a Cl- that is required for oxygen evolution. PSII binds additional chlorophylls, carotenoids and specific lipids. as cofactor.

The protein localises to the plastid. It is found in the chloroplast thylakoid membrane. One of the components of the core complex of photosystem II (PSII). It binds chlorophyll and helps catalyze the primary light-induced photochemical processes of PSII. PSII is a light-driven water:plastoquinone oxidoreductase, using light energy to abstract electrons from H(2)O, generating O(2) and a proton gradient subsequently used for ATP formation. The protein is Photosystem II CP43 reaction center protein of Anthoceros angustus (Hornwort).